Here is a 545-residue protein sequence, read N- to C-terminus: Chaperonin GroEL (545 aa).

ATP is bound by residues 30–33, lysine 51, 87–91, glycine 415, and aspartate 495; these read TLGP and DGTTT.

It belongs to the chaperonin (HSP60) family. As to quaternary structure, forms a cylinder of 14 subunits composed of two heptameric rings stacked back-to-back. Interacts with the co-chaperonin GroES.

Its subcellular location is the cytoplasm. It carries out the reaction ATP + H2O + a folded polypeptide = ADP + phosphate + an unfolded polypeptide.. Its function is as follows. Together with its co-chaperonin GroES, plays an essential role in assisting protein folding. The GroEL-GroES system forms a nano-cage that allows encapsulation of the non-native substrate proteins and provides a physical environment optimized to promote and accelerate protein folding. This chain is Chaperonin GroEL, found in Shewanella putrefaciens (strain CN-32 / ATCC BAA-453).